Here is a 357-residue protein sequence, read N- to C-terminus: Arginine kinase Cal b 2.0101 (357 aa).

One can recognise a Phosphagen kinase N-terminal domain in the interval 9 to 91 (KLEEGFKKLE…FDPIIEDYHK (83 aa)). Residue 64–68 (GVGVY) participates in L-arginine binding. In terms of domain architecture, Phosphagen kinase C-terminal spans 119–356 (FVISTRVRCG…LELIKIEKEM (238 aa)). ATP-binding positions include 122–126 (STRVR) and H185. An intrachain disulfide couples C201 to C271. An L-arginine-binding site is contributed by E225. An ATP-binding site is contributed by R229. C271 serves as a coordination point for L-arginine. ATP contacts are provided by residues 280–284 (RASVH) and 309–314 (RGTRGE). Position 314 (E314) interacts with L-arginine.

The protein belongs to the ATP:guanido phosphotransferase family. As to expression, expressed in chela muscle (at protein level). Expressed in muscle.

It carries out the reaction L-arginine + ATP = N(omega)-phospho-L-arginine + ADP + H(+). Catalyzes the reversible transfer of high energy ATP gamma-phosphate group to L-arginine. The chain is Arginine kinase Cal b 2.0101 from Callinectes bellicosus (Warrior swimming crab).